The sequence spans 361 residues: Aromatic amino acid aminotransferase (361 aa).

K215 is subject to N6-(pyridoxal phosphate)lysine.

It belongs to the class-II pyridoxal-phosphate-dependent aminotransferase family. In terms of assembly, homodimer. It depends on pyridoxal 5'-phosphate as a cofactor.

It catalyses the reaction an aromatic L-alpha-amino acid + 2-oxoglutarate = an aromatic oxo-acid + L-glutamate. Its function is as follows. Aminotransferase that catalyzes the conversion of aromatic amino acids and 2-oxoglutarate into corresponding aromatic oxo acids and L-glutamate. This is Aromatic amino acid aminotransferase from Mycolicibacterium smegmatis (strain ATCC 700084 / mc(2)155) (Mycobacterium smegmatis).